Here is a 739-residue protein sequence, read N- to C-terminus: Phosphoribosylformylglycinamidine synthase subunit PurL (739 aa).

The active site involves H54. Residues Y57 and K96 each contribute to the ATP site. E98 contacts Mg(2+). Substrate contacts are provided by residues 99–102 (SHNH) and R121. H100 (proton acceptor) is an active-site residue. D122 contributes to the Mg(2+) binding site. Q245 contributes to the substrate binding site. D273 contacts Mg(2+). Residue 317 to 319 (ESQ) participates in substrate binding. Residues D500 and G537 each contribute to the ATP site. N538 provides a ligand contact to Mg(2+). A substrate-binding site is contributed by S540.

Belongs to the FGAMS family. In terms of assembly, monomer. Part of the FGAM synthase complex composed of 1 PurL, 1 PurQ and 2 PurS subunits.

It localises to the cytoplasm. The catalysed reaction is N(2)-formyl-N(1)-(5-phospho-beta-D-ribosyl)glycinamide + L-glutamine + ATP + H2O = 2-formamido-N(1)-(5-O-phospho-beta-D-ribosyl)acetamidine + L-glutamate + ADP + phosphate + H(+). It participates in purine metabolism; IMP biosynthesis via de novo pathway; 5-amino-1-(5-phospho-D-ribosyl)imidazole from N(2)-formyl-N(1)-(5-phospho-D-ribosyl)glycinamide: step 1/2. Part of the phosphoribosylformylglycinamidine synthase complex involved in the purines biosynthetic pathway. Catalyzes the ATP-dependent conversion of formylglycinamide ribonucleotide (FGAR) and glutamine to yield formylglycinamidine ribonucleotide (FGAM) and glutamate. The FGAM synthase complex is composed of three subunits. PurQ produces an ammonia molecule by converting glutamine to glutamate. PurL transfers the ammonia molecule to FGAR to form FGAM in an ATP-dependent manner. PurS interacts with PurQ and PurL and is thought to assist in the transfer of the ammonia molecule from PurQ to PurL. The chain is Phosphoribosylformylglycinamidine synthase subunit PurL from Bacillus cereus (strain ATCC 14579 / DSM 31 / CCUG 7414 / JCM 2152 / NBRC 15305 / NCIMB 9373 / NCTC 2599 / NRRL B-3711).